A 552-amino-acid chain; its full sequence is Scaffold protein (552 aa).

It belongs to the poxviridae protein D13 family. As to quaternary structure, homotrimer. Self-assembles to form a layer. Interacts with A17 (via N-terminus); this interaction is necessary for D13 association with membranes.

Its subcellular location is the membrane. Scaffold protein which forms a transitory spherical honeycomb lattice providing curvature and rigidity to the convex membrane of crescent and immature virions (IV). This association occurs concomitantly with viral membrane formation. Targeted by the drug rifampicin, which prevents the formation of this lattice, and hence virus morphogenesis. In the presence of rifampicin, irregularly shaped membranes that lack the honeycomb layer accumulate around areas of electron-dense viroplasm. This layer is lost from virions during maturation from IV to mature virion (MV), through the proteolysis of A17 N-terminus. The protein is Scaffold protein of Vertebrata (FPV).